Here is a 581-residue protein sequence, read N- to C-terminus: Arginine--tRNA ligase (581 aa).

Residues 126–136 (PNLAKEMHVGH) carry the 'HIGH' region motif.

This sequence belongs to the class-I aminoacyl-tRNA synthetase family. Monomer.

The protein localises to the cytoplasm. The catalysed reaction is tRNA(Arg) + L-arginine + ATP = L-arginyl-tRNA(Arg) + AMP + diphosphate. The polypeptide is Arginine--tRNA ligase (Shewanella sp. (strain MR-7)).